A 289-amino-acid chain; its full sequence is Nucleotide-binding protein LAF_0356 (289 aa).

Position 12–19 (12–19) interacts with ATP; that stretch reads GMSGAGKT. 62 to 65 provides a ligand contact to GTP; that stretch reads DSRS.

This sequence belongs to the RapZ-like family.

Its function is as follows. Displays ATPase and GTPase activities. In Limosilactobacillus fermentum (strain NBRC 3956 / LMG 18251) (Lactobacillus fermentum), this protein is Nucleotide-binding protein LAF_0356.